The following is an 825-amino-acid chain: Probable ATP-dependent RNA helicase DDX20 (825 aa).

Residues 27-50 (PVQAVEPTPASPWTQRTAHDIGGP) form a disordered region. Positions 63-91 (ADFESLLLSRPVLEGLRAAGFERPSPVQL) match the Q motif motif. ATP-binding positions include R85, Q90, 107 to 114 (AKSGTGKT), and 110 to 115 (GTGKTC). In terms of domain architecture, Helicase ATP-binding spans 94–265 (IPLGRCGLDL…TRYMRDPTFV (172 aa)). Phosphoserine is present on S188. The short motif at 212-215 (DEAD) is the DEAD box element. At S270 the chain carries Phosphoserine. One can recognise a Helicase C-terminal domain in the interval 300–449 (HLQELFSKVP…PIPPGLMEEC (150 aa)). Polar residues-rich tracts occupy residues 465–475 (SPTVATQSPKK) and 484–504 (FQSQRTPGNQTPSPRNTSASA). Disordered regions lie at residues 465–573 (SPTV…PGSL) and 642–753 (QMLV…EPQE). 3 positions are modified to phosphoserine: S472, S501, and S506. The span at 508–518 (RPKHSKPKLPV) shows a compositional bias: basic residues. A compositionally biased stretch (polar residues) spans 547-571 (KNSVQTSVEDSSSNSQHQAKDSSPG). T552 carries the post-translational modification Phosphothreonine. Phosphoserine occurs at positions 561, 653, 655, 657, 673, 678, and 679. The segment covering 646–668 (SSSQSGDSESDSDSCSSRTSSQS) has biased composition (low complexity). Phosphothreonine occurs at positions 689 and 706. Over residues 698 to 711 (EQVQNGNDTPTQVE) the composition is skewed to polar residues. The span at 733-744 (KQSRRNPARRSS) shows a compositional bias: basic residues.

Belongs to the DEAD box helicase family. DDX20 subfamily. Part of the core SMN complex that contains SMN1, GEMIN2/SIP1, DDX20/GEMIN3, GEMIN4, GEMIN5, GEMIN6, GEMIN7, GEMIN8 and STRAP/UNRIP. Part of the SMN-Sm complex that contains SMN1, GEMIN2/SIP1, DDX20/GEMIN3, GEMIN4, GEMIN5, GEMIN6, GEMIN7, GEMIN8, STRAP/UNRIP and the Sm proteins SNRPB, SNRPD1, SNRPD2, SNRPD3, SNRPE, SNRPF and SNRPG. Interacts with SMN1; the interaction is direct. Interacts with GEMIN4; the interaction is direct. Interacts with GEMIN5. Interacts with SNUPN; the interaction is direct. Interacts with PPP4R2. Interacts with FOXL2. Interacts with NANOS1 and PUM2.

It is found in the cytoplasm. Its subcellular location is the nucleus. The protein localises to the gem. The catalysed reaction is ATP + H2O = ADP + phosphate + H(+). The enzyme catalyses a ribonucleoside 5'-triphosphate + H2O = a ribonucleoside 5'-diphosphate + phosphate + H(+). The SMN complex catalyzes the assembly of small nuclear ribonucleoproteins (snRNPs), the building blocks of the spliceosome, and thereby plays an important role in the splicing of cellular pre-mRNAs. Most spliceosomal snRNPs contain a common set of Sm proteins SNRPB, SNRPD1, SNRPD2, SNRPD3, SNRPE, SNRPF and SNRPG that assemble in a heptameric protein ring on the Sm site of the small nuclear RNA to form the core snRNP (Sm core). In the cytosol, the Sm proteins SNRPD1, SNRPD2, SNRPE, SNRPF and SNRPG are trapped in an inactive 6S pICln-Sm complex by the chaperone CLNS1A that controls the assembly of the core snRNP. To assemble core snRNPs, the SMN complex accepts the trapped 5Sm proteins from CLNS1A forming an intermediate. Binding of snRNA inside 5Sm triggers eviction of the SMN complex, thereby allowing binding of SNRPD3 and SNRPB to complete assembly of the core snRNP. May also play a role in the metabolism of small nucleolar ribonucleoprotein (snoRNPs). The sequence is that of Probable ATP-dependent RNA helicase DDX20 (Ddx20) from Mus musculus (Mouse).